Reading from the N-terminus, the 209-residue chain is N-(5'-phosphoribosyl)anthranilate isomerase (209 aa).

The protein belongs to the TrpF family.

The catalysed reaction is N-(5-phospho-beta-D-ribosyl)anthranilate = 1-(2-carboxyphenylamino)-1-deoxy-D-ribulose 5-phosphate. It participates in amino-acid biosynthesis; L-tryptophan biosynthesis; L-tryptophan from chorismate: step 3/5. This is N-(5'-phosphoribosyl)anthranilate isomerase from Staphylococcus carnosus (strain TM300).